Reading from the N-terminus, the 613-residue chain is Ribosome-associated molecular chaperone SSB1 (613 aa).

A nucleotide binding domain (NBD) region spans residues methionine 1–glutamate 391. ATP contacts are provided by residues threonine 16–tyrosine 18, lysine 73, glycine 205–threonine 207, glutamate 271–serine 278, and glycine 342. Residues threonine 392–proline 402 form an inter-domain linker region. The tract at residues leucine 403 to arginine 613 is substrate binding domain (SBD). The tract at residues serine 516–serine 612 is lid domain (SBDalpha). The short motif at isoleucine 574–leucine 582 is the Nuclear export signal element.

This sequence belongs to the heat shock protein 70 family. Ssb-type Hsp70 subfamily. Binds to ribosomes. Binds close to the ribosomal tunnel exit via contacts with both ribosomal proteins and rRNA. Directly interacts with nascent polypeptides. This interaction is dependent on the ribosome-associated complex (RAC). Interacts with SSE1. Interacts with FES1.

The protein localises to the cytoplasm. The catalysed reaction is ATP + H2O = ADP + phosphate + H(+). Functionally, ribosome-bound, Hsp70-type chaperone that assists in the cotranslational folding of newly synthesized proteins in the cytosol. Stimulates folding by interacting with nascent chains, binding to short, largely hydrophobic sequences exposed by unfolded proteins, thereby stabilizing longer, more slowly translated, and aggregation-prone nascent polypeptides and domains that cannot fold stably until fully synthesized. The Hsp70-protein substrate interaction depends on ATP-binding and on allosteric regulation between the NBD and the SBD. The ATP-bound state is characterized by a fast exchange rate of substrate (low affinity state), while in the ADP-bound state exchange is much slower (high affinity state). During the Hsp70 cycle, the chaperone switches between the ATP-bound state (open conformation) and the ADP-bound state (closed conformation) by major conformational rearrangements involving mainly the lid domain. Ssb cooperates with a specific Hsp40/Hsp70 co-chaperone termed the ribosome-associated complex (RAC), which stimulates the ATPase activity of the ribosome-associated pool of Ssbs and switches it to the high affinity substrate binding state. Hsp110 chaperone SSE1 and FES1 act as nucleotide exchange factors that cause substrate release. The polypeptide is Ribosome-associated molecular chaperone SSB1 (SSB1) (Nakaseomyces delphensis (Yeast)).